Reading from the N-terminus, the 420-residue chain is Adenylosuccinate synthetase (420 aa).

Residues 12 to 18 (GDEGKGK) and 40 to 42 (GHT) each bind GTP. Asp13 (proton acceptor) is an active-site residue. 2 residues coordinate Mg(2+): Asp13 and Gly40. IMP contacts are provided by residues 13 to 16 (DEGK), 38 to 41 (NAGH), Thr128, Arg142, Gln221, Thr236, and Arg299. The active-site Proton donor is the His41. Residue 295 to 301 (ATTGRPR) coordinates substrate. GTP contacts are provided by residues Arg301, 327–329 (KAD), and 399–401 (SYG).

This sequence belongs to the adenylosuccinate synthetase family. Homodimer. The cofactor is Mg(2+).

Its subcellular location is the cytoplasm. It carries out the reaction IMP + L-aspartate + GTP = N(6)-(1,2-dicarboxyethyl)-AMP + GDP + phosphate + 2 H(+). The protein operates within purine metabolism; AMP biosynthesis via de novo pathway; AMP from IMP: step 1/2. Its function is as follows. Plays an important role in the de novo pathway of purine nucleotide biosynthesis. Catalyzes the first committed step in the biosynthesis of AMP from IMP. This chain is Adenylosuccinate synthetase, found in Petrotoga mobilis (strain DSM 10674 / SJ95).